Reading from the N-terminus, the 341-residue chain is Ketol-acid reductoisomerase (NADP(+)) (341 aa).

In terms of domain architecture, KARI N-terminal Rossmann spans 1-182 (MTELFYDDDA…GGTRAGVIKT (182 aa)). NADP(+) is bound by residues 25-28 (YGSQ), serine 51, serine 53, and 83-86 (DQVQ). Histidine 108 is a catalytic residue. Glycine 134 contacts NADP(+). Positions 183 to 328 (TFTEETETDL…RELRKLFSWI (146 aa)) constitute a KARI C-terminal knotted domain. The Mg(2+) site is built by aspartate 191, glutamate 195, glutamate 227, and glutamate 231. Serine 252 contributes to the substrate binding site.

It belongs to the ketol-acid reductoisomerase family. The cofactor is Mg(2+).

The catalysed reaction is (2R)-2,3-dihydroxy-3-methylbutanoate + NADP(+) = (2S)-2-acetolactate + NADPH + H(+). The enzyme catalyses (2R,3R)-2,3-dihydroxy-3-methylpentanoate + NADP(+) = (S)-2-ethyl-2-hydroxy-3-oxobutanoate + NADPH + H(+). The protein operates within amino-acid biosynthesis; L-isoleucine biosynthesis; L-isoleucine from 2-oxobutanoate: step 2/4. Its pathway is amino-acid biosynthesis; L-valine biosynthesis; L-valine from pyruvate: step 2/4. In terms of biological role, involved in the biosynthesis of branched-chain amino acids (BCAA). Catalyzes an alkyl-migration followed by a ketol-acid reduction of (S)-2-acetolactate (S2AL) to yield (R)-2,3-dihydroxy-isovalerate. In the isomerase reaction, S2AL is rearranged via a Mg-dependent methyl migration to produce 3-hydroxy-3-methyl-2-ketobutyrate (HMKB). In the reductase reaction, this 2-ketoacid undergoes a metal-dependent reduction by NADPH to yield (R)-2,3-dihydroxy-isovalerate. This chain is Ketol-acid reductoisomerase (NADP(+)), found in Renibacterium salmoninarum (strain ATCC 33209 / DSM 20767 / JCM 11484 / NBRC 15589 / NCIMB 2235).